Consider the following 324-residue polypeptide: Lactonase drp35 (324 aa).

Positions 47, 109, 111, 129, 132, 134, 137, 184, 235, and 236 each coordinate Ca(2+). The active-site Proton donor is Asp235.

Belongs to the SMP-30/CGR1 family. It depends on Ca(2+) as a cofactor.

The protein resides in the cytoplasm. Functionally, exhibits lactonase activity. Acts in cells with perturbed membrane integrity and is possibly related to the membrane homeostasis. This chain is Lactonase drp35 (drp35), found in Staphylococcus saprophyticus subsp. saprophyticus (strain ATCC 15305 / DSM 20229 / NCIMB 8711 / NCTC 7292 / S-41).